The sequence spans 494 residues: Cytochrome P450 2A13 (494 aa).

Asn-297 serves as a coordination point for substrate. Cys-439 contributes to the heme binding site.

It belongs to the cytochrome P450 family. The cofactor is heme. In terms of tissue distribution, expressed in liver and a number of extrahepatic tissues, including nasal mucosa, lung, trachea, brain, mammary gland, prostate, testis, and uterus, but not in heart, kidney, bone marrow, colon, small intestine, spleen, stomach, thymus, or skeletal muscle.

The protein localises to the endoplasmic reticulum membrane. It localises to the microsome membrane. It catalyses the reaction an organic molecule + reduced [NADPH--hemoprotein reductase] + O2 = an alcohol + oxidized [NADPH--hemoprotein reductase] + H2O + H(+). Exhibits a coumarin 7-hydroxylase activity. Active in the metabolic activation of hexamethylphosphoramide, N,N-dimethylaniline, 2'-methoxyacetophenone, N-nitrosomethylphenylamine, and the tobacco-specific carcinogen, 4-(methylnitrosamino)-1-(3-pyridyl)-1-butanone. Possesses phenacetin O-deethylation activity. This Homo sapiens (Human) protein is Cytochrome P450 2A13 (CYP2A13).